Consider the following 186-residue polypeptide: Ribosome-recycling factor (186 aa).

It belongs to the RRF family.

It localises to the cytoplasm. Functionally, responsible for the release of ribosomes from messenger RNA at the termination of protein biosynthesis. May increase the efficiency of translation by recycling ribosomes from one round of translation to another. The sequence is that of Ribosome-recycling factor from Bacteroides fragilis (strain ATCC 25285 / DSM 2151 / CCUG 4856 / JCM 11019 / LMG 10263 / NCTC 9343 / Onslow / VPI 2553 / EN-2).